The sequence spans 492 residues: UPF0652 protein C22H10.08 (492 aa).

Belongs to the UPF0652 family.

It localises to the cytoplasm. The protein localises to the nucleus. The sequence is that of UPF0652 protein C22H10.08 from Schizosaccharomyces pombe (strain 972 / ATCC 24843) (Fission yeast).